A 74-amino-acid chain; its full sequence is Cytochrome c oxidase subunit 2 (74 aa).

Over 1 to 14 the chain is Mitochondrial intermembrane; that stretch reads MAHPSQLGLQDAAS. Residues 15-45 traverse the membrane as a helical segment; sequence PVMEELLHFHDHALMIVFLISTLVLYIIVAM. Over 46-74 the chain is Mitochondrial matrix; that stretch reads VSTKLTDKYTIDSQEIEIVWTVLPAVILI.

Belongs to the cytochrome c oxidase subunit 2 family. As to quaternary structure, component of the cytochrome c oxidase (complex IV, CIV), a multisubunit enzyme composed of 14 subunits. The complex is composed of a catalytic core of 3 subunits MT-CO1, MT-CO2 and MT-CO3, encoded in the mitochondrial DNA, and 11 supernumerary subunits COX4I, COX5A, COX5B, COX6A, COX6B, COX6C, COX7A, COX7B, COX7C, COX8 and NDUFA4, which are encoded in the nuclear genome. The complex exists as a monomer or a dimer and forms supercomplexes (SCs) in the inner mitochondrial membrane with NADH-ubiquinone oxidoreductase (complex I, CI) and ubiquinol-cytochrome c oxidoreductase (cytochrome b-c1 complex, complex III, CIII), resulting in different assemblies (supercomplex SCI(1)III(2)IV(1) and megacomplex MCI(2)III(2)IV(2)). Found in a complex with TMEM177, COA6, COX18, COX20, SCO1 and SCO2. Interacts with TMEM177 in a COX20-dependent manner. Interacts with COX20. Interacts with COX16. Requires Cu cation as cofactor.

Its subcellular location is the mitochondrion inner membrane. The enzyme catalyses 4 Fe(II)-[cytochrome c] + O2 + 8 H(+)(in) = 4 Fe(III)-[cytochrome c] + 2 H2O + 4 H(+)(out). Component of the cytochrome c oxidase, the last enzyme in the mitochondrial electron transport chain which drives oxidative phosphorylation. The respiratory chain contains 3 multisubunit complexes succinate dehydrogenase (complex II, CII), ubiquinol-cytochrome c oxidoreductase (cytochrome b-c1 complex, complex III, CIII) and cytochrome c oxidase (complex IV, CIV), that cooperate to transfer electrons derived from NADH and succinate to molecular oxygen, creating an electrochemical gradient over the inner membrane that drives transmembrane transport and the ATP synthase. Cytochrome c oxidase is the component of the respiratory chain that catalyzes the reduction of oxygen to water. Electrons originating from reduced cytochrome c in the intermembrane space (IMS) are transferred via the dinuclear copper A center (CU(A)) of subunit 2 and heme A of subunit 1 to the active site in subunit 1, a binuclear center (BNC) formed by heme A3 and copper B (CU(B)). The BNC reduces molecular oxygen to 2 water molecules using 4 electrons from cytochrome c in the IMS and 4 protons from the mitochondrial matrix. In Megalops atlanticus (Tarpon), this protein is Cytochrome c oxidase subunit 2 (mt-co2).